Here is a 233-residue protein sequence, read N- to C-terminus: Serine-rich 25 kDa antigen protein (233 aa).

Residues 35-219 are disordered; it reads KNEASPEKLE…DNNNLDAASS (185 aa). Residues 38–53 show a composition bias toward basic and acidic residues; the sequence is ASPEKLEEAEEKEKSS. Acidic residues predominate over residues 61–71; the sequence is SNEDNEDDEDE. 10 repeat units span residues 82-93, 102-113, 114-125, 126-137, 138-149, 150-161, 162-169, 170-177, 178-185, and 186-193. The interval 82 to 161 is 6 X 12 AA tandem repeats of S-S-S-D-K-P-D-N-K-P-E-A; that stretch reads SSSDKPDNKP…SDKPDNKPEA (80 aa). Basic and acidic residues predominate over residues 83-159; the sequence is SSDKPDNKPE…SSSDKPDNKP (77 aa). Over residues 160–192 the composition is skewed to polar residues; sequence EASSTNKPEASSTNKPEASSTNKPEASSTNKPE. A 4 X 8 AA tandem repeats of S-S-T-N-K-P-E-A region spans residues 162–193; that stretch reads SSTNKPEASSTNKPEASSTNKPEASSTNKPEA. A compositionally biased stretch (low complexity) spans 193–219; the sequence is ASSTSNSNDKSGSSSDNDNNNLDAASS.

In terms of processing, phosphorylated on serine residue(s). O-glycosylated; glycans consist of single N-acetylglucosamine residues. Post-translationally, O-acylated; acyl group is probably palmitate, not myristate.

It is found in the cell membrane. Functionally, plays a role in the adhesion to host cells. Involved in the adhesion to host apoptotic cells thereby facilitating their phagocytosis. In Entamoeba histolytica (strain ATCC 30459 / HM-1:IMSS / ABRM), this protein is Serine-rich 25 kDa antigen protein.